The primary structure comprises 264 residues: Ferric siderophore reductase (264 aa).

The 119-residue stretch at 9 to 127 folds into the FAD-binding FR-type domain; it reads SPTRLTYISD…PGPLKMNRFD (119 aa). Residues arginine 73, serine 74, threonine 76, aspartate 90, valine 92, histidine 96, alanine 100, threonine 101, lysine 247, asparagine 249, threonine 250, and alanine 252 each coordinate FAD.

This sequence belongs to the SIP oxidoreductase family. It depends on FAD as a cofactor.

Functionally, ferric-siderophore reductase involved in iron removal from the siderophores after their transport into the cell. Catalyzes the reduction of the ferric iron bound to the hydroxamate siderophores produced by Shewanella to ferrous iron. Can use a ferredoxin as electron donor. Despite the clear evidence for the interaction with NAD(P)H, no direct reduction of the enzyme by these compounds is observed, nor consumption of NAD(P)H, suggesting that NADH and NADPH are not the physiological electron donors. The polypeptide is Ferric siderophore reductase (Shewanella frigidimarina (strain NCIMB 400)).